Here is a 963-residue protein sequence, read N- to C-terminus: Importin-13 (963 aa).

HEAT repeat units lie at residues 24 to 54, 56 to 88, 95 to 135, 142 to 179, 194 to 231, 236 to 268, 276 to 325, 330 to 372, 375 to 438, 440 to 476, 487 to 522, 524 to 558, 562 to 600, 603 to 648, 676 to 716, 720 to 754, 761 to 803, 815 to 845, 860 to 893, and 897 to 931; these read ENVEKALHQLYYDPNIENKNLAQKWLMQAQV, PQAWHFSWQLLQPDKVPEIQYFGASALHIKISR, TDQY…LSMM, AVADMVRLFQAEDSPVDGQGRCLALLELLTVLPEEFQT, LAVECGAVFPLLEQLLQQPSSPSCVRQKVLKCFSSWVQ, LQDCEALIQAAFAALQDSELFDSSVEAIVNAIS, VNTL…ALLD, WQSF…DDIL, EAEK…YEML, AELLSNLYDKLGRLLTSSEEPYSWQHTEALLYGFQSI, VVPGLIGLIPRISISNVQLADTVMFTIGALSEWLAD, PVMINSVLPLVLHALGNPELSVSSVSTLKKICREC, LPPYAANIVAVSQDVLMKQIHKTSQCMWLMQALGFLLSA, VEEI…SNLF, PVVV…VKTL, FAPMVPQLCEMLGRMYSTIPQASALDLTRQLVHIF, FPPI…ALKR, VKAVFQCAVLALKFPEAPTVKASCGFFTELL, EDGRMLLIAVLEAIGGQASRSLMDCFADILFALN, and FSLLSMWIKEALQPPGFPSARLSPEQKDTFSQQIL. In terms of domain architecture, Importin N-terminal spans 45–111; the sequence is AQKWLMQAQV…KAQLFTQITR (67 aa).

This sequence belongs to the importin beta family. As to quaternary structure, interacts with UBC9, RAN, RBM8A, eIF-1A and PAX6. As to expression, expressed in fetal brain, heart, intestine and kidney.

It localises to the cytoplasm. The protein resides in the nucleus. Its function is as follows. Functions in nuclear protein import as nuclear transport receptor. Serves as receptor for nuclear localization signals (NLS) in cargo substrates. Is thought to mediate docking of the importin/substrate complex to the nuclear pore complex (NPC) through binding to nucleoporin and the complex is subsequently translocated through the pore by an energy requiring, Ran-dependent mechanism. At the nucleoplasmic side of the NPC, Ran binds to the importin, the importin/substrate complex dissociates and importin is re-exported from the nucleus to the cytoplasm where GTP hydrolysis releases Ran. The directionality of nuclear import is thought to be conferred by an asymmetric distribution of the GTP- and GDP-bound forms of Ran between the cytoplasm and nucleus. Mediates the nuclear import of UBC9, the RBM8A/MAGOH complex, PAX6 and probably other members of the paired homeobox family. Also mediates nuclear export of eIF-1A, and the cytoplasmic release of eIF-1A is triggered by the loading of import substrates onto IPO13. The chain is Importin-13 (IPO13) from Homo sapiens (Human).